The primary structure comprises 465 residues: Cytochrome P450 85A1 (465 aa).

Residues 2–22 (GAMMVMMGLLLIIVSLCSALL) traverse the membrane as a helical segment. Cys-415 is a heme binding site.

This sequence belongs to the cytochrome P450 family. Heme serves as cofactor. As to expression, mainly expressed in apical shoots, hypocotyls, siliques and roots. Also present in the female gametophyte.

It is found in the membrane. The catalysed reaction is 6-deoxoteasterone + reduced [NADPH--hemoprotein reductase] + O2 = 6alpha-hydroxyteasterone + oxidized [NADPH--hemoprotein reductase] + H2O + H(+). The enzyme catalyses 6alpha-hydroxytyphasterol + reduced [NADPH--hemoprotein reductase] + O2 = teasterone + oxidized [NADPH--hemoprotein reductase] + 2 H2O + H(+). It carries out the reaction 3-dehydro-6-deoxoteasterone + reduced [NADPH--hemoprotein reductase] + O2 = 3-dehydro-6alpha-hydroxyteasterone + oxidized [NADPH--hemoprotein reductase] + H2O + H(+). It catalyses the reaction 3-dehydro-6alpha-hydroxyteasterone + reduced [NADPH--hemoprotein reductase] + O2 = 3-dehydroteasterone + oxidized [NADPH--hemoprotein reductase] + 2 H2O + H(+). The catalysed reaction is 6-deoxotyphasterol + reduced [NADPH--hemoprotein reductase] + O2 = 6alpha-hydroxytyphasterol + oxidized [NADPH--hemoprotein reductase] + H2O + H(+). The enzyme catalyses 6alpha-hydroxytyphasterol + reduced [NADPH--hemoprotein reductase] + O2 = typhasterol + oxidized [NADPH--hemoprotein reductase] + 2 H2O + H(+). It carries out the reaction 6-deoxocastasterone + reduced [NADPH--hemoprotein reductase] + O2 = 6alpha-hydroxycastasterone + oxidized [NADPH--hemoprotein reductase] + H2O + H(+). It catalyses the reaction 6alpha-hydroxycastasterone + reduced [NADPH--hemoprotein reductase] + O2 = castasterone + oxidized [NADPH--hemoprotein reductase] + 2 H2O + H(+). The catalysed reaction is 6-deoxocastasterone + 2 reduced [NADPH--hemoprotein reductase] + 2 O2 = castasterone + 2 oxidized [NADPH--hemoprotein reductase] + 3 H2O + 2 H(+). The enzyme catalyses 6-deoxoteasterone + 2 reduced [NADPH--hemoprotein reductase] + 2 O2 = teasterone + 2 oxidized [NADPH--hemoprotein reductase] + 3 H2O + 2 H(+). It carries out the reaction 6-deoxotyphasterol + 2 reduced [NADPH--hemoprotein reductase] + 2 O2 = typhasterol + 2 oxidized [NADPH--hemoprotein reductase] + 3 H2O + 2 H(+). It catalyses the reaction 3-dehydro-6-deoxoteasterone + 2 reduced [NADPH--hemoprotein reductase] + 2 O2 = 3-dehydroteasterone + 2 oxidized [NADPH--hemoprotein reductase] + 3 H2O + 2 H(+). The protein operates within plant hormone biosynthesis; brassinosteroid biosynthesis. Functionally, catalyzes the C6-oxidation step in brassinosteroids biosynthesis. Converts 6-deoxocastasterone (6-deoxoCS) to castasterone (CS). May also convert 6-deoxoteasterone (6-deoxoTE) to teasterone (TE), 3-dehydro-6-deoxoteasterone (6-deoxo3DT, 6-deoxo-3-DHT) to 3-dehydroteasterone (3DT, 3-DHT), and 6-deoxotyphasterol (6-deoxoTY) to typhasterol (TY). Required for the initiation of female gametogenesis (megagametogenesis). This chain is Cytochrome P450 85A1, found in Arabidopsis thaliana (Mouse-ear cress).